The sequence spans 29 residues: GIPICGETCTIGTCNTPGCTCSWPVCTRD.

Residues 1–29 (GIPICGETCTIGTCNTPGCTCSWPVCTRD) constitute a cross-link (cyclopeptide (Gly-Asp)). Cystine bridges form between Cys-5–Cys-19, Cys-9–Cys-21, and Cys-14–Cys-26.

This is a cyclic peptide. Post-translationally, contains 3 disulfide bonds.

Probably participates in a plant defense mechanism (Potential). Binds to and induces leakage in phospholipd membranes, particularly ones containing 1-palmitoyl-2-oleophosphatidylethanolamine (POPE). This is Cyclotide mech-7 from Melicytus chathamicus (Chatham Island mahoe).